The chain runs to 80 residues: Exodeoxyribonuclease 7 small subunit (80 aa).

Belongs to the XseB family. In terms of assembly, heterooligomer composed of large and small subunits.

Its subcellular location is the cytoplasm. It carries out the reaction Exonucleolytic cleavage in either 5'- to 3'- or 3'- to 5'-direction to yield nucleoside 5'-phosphates.. Bidirectionally degrades single-stranded DNA into large acid-insoluble oligonucleotides, which are then degraded further into small acid-soluble oligonucleotides. The sequence is that of Exodeoxyribonuclease 7 small subunit from Rickettsia akari (strain Hartford).